Reading from the N-terminus, the 714-residue chain is Fimbrin-3 (714 aa).

Residues 7–55 (VIVSDPWLQSQLTQVELRSLNSKFVALKNQSGKVTLEDLPSVLVKVKSL) form the EF-hand domain. Calponin-homology (CH) domains are found at residues 124–241 (QSEK…KIQL), 269–372 (LPPE…HERN), 393–499 (CRDE…RTHM), and 514–622 (DMTD…YWSL). Actin-binding stretches follow at residues 124-372 (QSEK…HERN) and 393-622 (CRDE…YWSL). Residues 628–662 (SSESSSSSSDSSSTHSTTTTCTSTCTSTDASPAPS) are compositionally biased toward low complexity. A disordered region spans residues 628 to 694 (SSESSSSSSD…NEVSSLTIEE (67 aa)). A compositionally biased stretch (polar residues) spans 670–680 (SSLNGEVSSLT). Residues 681–694 (IEEDNEVSSLTIEE) show a composition bias toward acidic residues.

As to quaternary structure, interacts with F-actin.

The protein resides in the cytoplasm. The protein localises to the cytoskeleton. Functionally, cross-links actin filaments (F-actin). Stabilizes and prevents F-actin depolymerization mediated by profilin. May regulate actin cytoarchitecture, cell cycle, cell division, cell elongation and cytoplasmic tractus. This chain is Fimbrin-3, found in Arabidopsis thaliana (Mouse-ear cress).